The following is a 282-amino-acid chain: Elongation factor Ts (282 aa).

The tract at residues 80 to 83 (TDFV) is involved in Mg(2+) ion dislocation from EF-Tu.

It belongs to the EF-Ts family.

The protein resides in the cytoplasm. Associates with the EF-Tu.GDP complex and induces the exchange of GDP to GTP. It remains bound to the aminoacyl-tRNA.EF-Tu.GTP complex up to the GTP hydrolysis stage on the ribosome. The protein is Elongation factor Ts of Chlamydia felis (strain Fe/C-56) (Chlamydophila felis).